Here is a 136-residue protein sequence, read N- to C-terminus: Glutaredoxin-C7 (136 aa).

In terms of domain architecture, Glutaredoxin spans 29-135; sequence LLRIESLASE…PLLKDAGALW (107 aa). Residues cysteine 49 and cysteine 52 are joined by a disulfide bond. The short motif at 133–136 is the Responsive for interaction with TGA factors element; the sequence is ALWL.

It belongs to the glutaredoxin family. CC-type subfamily. Interacts with TGA2, TGA3, TGA7 and PAN. Interacts with TGA9 and TGA10 in the nucleus. As to expression, highly expressed in inflorescences, roots, and siliques. Expressed at lower levels in mature flowers.

The protein resides in the cytoplasm. Its subcellular location is the nucleus. Has a glutathione-disulfide oxidoreductase activity in the presence of NADPH and glutathione reductase. Reduces low molecular weight disulfides and proteins. Involved in flower development as a regulator of petal primorida initiation and further petal morphogenesis. May mediate post-translational modifications of target proteins required for normal petal organ initiation and morphogenesis. ROXY1/TGA protein interactions can occur in vivo and support their biological relevance in petal development. May be involved in the regulation of the floral regulator class C gene AG (AGAMOUS). The sequence is that of Glutaredoxin-C7 (GRXC7) from Arabidopsis thaliana (Mouse-ear cress).